Consider the following 201-residue polypeptide: Ribonuclease HII (201 aa).

The region spanning 12 to 201 (DLVAGVDEVG…VRELLDASVE (190 aa)) is the RNase H type-2 domain. Positions 18, 19, and 110 each coordinate a divalent metal cation.

Belongs to the RNase HII family. Mn(2+) is required as a cofactor. Requires Mg(2+) as cofactor.

It is found in the cytoplasm. The catalysed reaction is Endonucleolytic cleavage to 5'-phosphomonoester.. Endonuclease that specifically degrades the RNA of RNA-DNA hybrids. This is Ribonuclease HII from Pseudomonas paraeruginosa (strain DSM 24068 / PA7) (Pseudomonas aeruginosa (strain PA7)).